Here is a 210-residue protein sequence, read N- to C-terminus: Thymidylate kinase (210 aa).

10 to 17 is a binding site for ATP; sequence GPEGAGKS.

Belongs to the thymidylate kinase family.

It carries out the reaction dTMP + ATP = dTDP + ADP. Its function is as follows. Phosphorylation of dTMP to form dTDP in both de novo and salvage pathways of dTTP synthesis. This chain is Thymidylate kinase, found in Pseudomonas savastanoi pv. phaseolicola (strain 1448A / Race 6) (Pseudomonas syringae pv. phaseolicola (strain 1448A / Race 6)).